A 101-amino-acid chain; its full sequence is uncharacterized protein (101 aa).

The N-terminal stretch at Met-1–Ala-25 is a signal peptide. Cys-26 carries N-palmitoyl cysteine lipidation. A lipid anchor (S-diacylglycerol cysteine) is attached at Cys-26.

The protein belongs to the MG439/MG440 family.

It is found in the cell membrane. This is an uncharacterized protein from Mycoplasma pneumoniae (strain ATCC 29342 / M129 / Subtype 1) (Mycoplasmoides pneumoniae).